A 758-amino-acid chain; its full sequence is DNA ligase (758 aa).

Positions 1–28 are disordered; sequence MPENFGAMRQDGLVSTSESDSPAPAATP. Residues 60–64, 109–110, and E148 contribute to the NAD(+) site; these read DAEFD and SL. The active-site N6-AMP-lysine intermediate is the K150. 4 residues coordinate NAD(+): R171, E208, K324, and K348. Positions 442, 445, 461, and 467 each coordinate Zn(2+). Residues 660 to 749 form the BRCT domain; sequence SVRRTLAGLT…PDHSAEAEEN (90 aa). The disordered stretch occupies residues 735 to 758; sequence LLAHGPDHSAEAEENESEGSTTND.

The protein belongs to the NAD-dependent DNA ligase family. LigA subfamily. It depends on Mg(2+) as a cofactor. Requires Mn(2+) as cofactor.

The catalysed reaction is NAD(+) + (deoxyribonucleotide)n-3'-hydroxyl + 5'-phospho-(deoxyribonucleotide)m = (deoxyribonucleotide)n+m + AMP + beta-nicotinamide D-nucleotide.. In terms of biological role, DNA ligase that catalyzes the formation of phosphodiester linkages between 5'-phosphoryl and 3'-hydroxyl groups in double-stranded DNA using NAD as a coenzyme and as the energy source for the reaction. It is essential for DNA replication and repair of damaged DNA. In Renibacterium salmoninarum (strain ATCC 33209 / DSM 20767 / JCM 11484 / NBRC 15589 / NCIMB 2235), this protein is DNA ligase.